A 179-amino-acid chain; its full sequence is Large ribosomal subunit protein uL6 (179 aa).

Belongs to the universal ribosomal protein uL6 family. As to quaternary structure, part of the 50S ribosomal subunit.

In terms of biological role, this protein binds to the 23S rRNA, and is important in its secondary structure. It is located near the subunit interface in the base of the L7/L12 stalk, and near the tRNA binding site of the peptidyltransferase center. This chain is Large ribosomal subunit protein uL6, found in Prochlorococcus marinus (strain MIT 9515).